We begin with the raw amino-acid sequence, 508 residues long: Maturase K (508 aa).

It belongs to the intron maturase 2 family. MatK subfamily.

The protein localises to the plastid. It localises to the chloroplast. Functionally, usually encoded in the trnK tRNA gene intron. Probably assists in splicing its own and other chloroplast group II introns. The polypeptide is Maturase K (Stewartia pseudocamellia (Japanese stewartia)).